A 346-amino-acid polypeptide reads, in one-letter code: Uroporphyrinogen decarboxylase (346 aa).

Substrate-binding positions include 26–30 (RQAGR), Asp76, Tyr153, Ser208, and His323.

It belongs to the uroporphyrinogen decarboxylase family. In terms of assembly, homodimer.

The protein localises to the cytoplasm. The enzyme catalyses uroporphyrinogen III + 4 H(+) = coproporphyrinogen III + 4 CO2. Its pathway is porphyrin-containing compound metabolism; protoporphyrin-IX biosynthesis; coproporphyrinogen-III from 5-aminolevulinate: step 4/4. In terms of biological role, catalyzes the decarboxylation of four acetate groups of uroporphyrinogen-III to yield coproporphyrinogen-III. This chain is Uroporphyrinogen decarboxylase, found in Prochlorococcus marinus (strain MIT 9312).